The following is a 347-amino-acid chain: Indole-3-glycerol phosphate lyase, chloroplastic (347 aa).

Disordered stretches follow at residues 1–38 and 64–89; these read MAFAPKTSSSSSLSSALQAAQSPPLLLRRMSSTATPRR and APPQAPAPAPVPPKQAAAPAERRSRP. The N-terminal 53 residues, 1–53, are a transit peptide targeting the chloroplast; the sequence is MAFAPKTSSSSSLSSALQAAQSPPLLLRRMSSTATPRRRYDAAVVVTTTTTAR. Positions 8–27 are enriched in low complexity; it reads SSSSSLSSALQAAQSPPLLL. The span at 64–76 shows a compositional bias: pro residues; that stretch reads APPQAPAPAPVPP.

It belongs to the TrpA family. In terms of assembly, tetramer of two alpha and two beta chains for the tryptophan synthase activity. Homodimer of alpha chains for the indole-3-glycerol phosphate lyase activity.

Its subcellular location is the plastid. It localises to the chloroplast. It catalyses the reaction (1S,2R)-1-C-(indol-3-yl)glycerol 3-phosphate = indole + D-glyceraldehyde 3-phosphate. The catalysed reaction is (1S,2R)-1-C-(indol-3-yl)glycerol 3-phosphate + L-serine = D-glyceraldehyde 3-phosphate + L-tryptophan + H2O. The protein operates within secondary metabolite biosynthesis; 2,4-dihydroxy-1,4-benzoxazin-3-one biosynthesis; 2,4-dihydroxy-1,4-benzoxazin-3-one from indoleglycerol phosphate: step 1/5. Its pathway is amino-acid biosynthesis; L-tryptophan biosynthesis; L-tryptophan from chorismate: step 5/5. Functionally, the alpha subunit is responsible for the aldol cleavage of indoleglycerol phosphate to indole and glyceraldehyde 3-phosphate. In bacteria, tryptophan synthase alpha (TSA) activity is almost completely dependent on formation of an active alpha2beta2 complex with tryptophan synthase beta (TSB), and indole is usually not released during tryptophan synthesis. In maize, the TSA homolog BX1 catalyzes the formation of free indole from indole-3-glycerol phosphate, independently of TSB. The sequence is that of Indole-3-glycerol phosphate lyase, chloroplastic (BX1) from Zea mays (Maize).